The sequence spans 468 residues: ATP synthase subunit beta (468 aa).

ATP is bound at residue 155–162 (GGAGVGKT).

It belongs to the ATPase alpha/beta chains family. F-type ATPases have 2 components, CF(1) - the catalytic core - and CF(0) - the membrane proton channel. CF(1) has five subunits: alpha(3), beta(3), gamma(1), delta(1), epsilon(1). CF(0) has three main subunits: a(1), b(2) and c(9-12). The alpha and beta chains form an alternating ring which encloses part of the gamma chain. CF(1) is attached to CF(0) by a central stalk formed by the gamma and epsilon chains, while a peripheral stalk is formed by the delta and b chains.

Its subcellular location is the cell membrane. The catalysed reaction is ATP + H2O + 4 H(+)(in) = ADP + phosphate + 5 H(+)(out). Functionally, produces ATP from ADP in the presence of a proton gradient across the membrane. The catalytic sites are hosted primarily by the beta subunits. This is ATP synthase subunit beta from Streptococcus pyogenes serotype M3 (strain ATCC BAA-595 / MGAS315).